A 536-amino-acid chain; its full sequence is Phosphoenolpyruvate carboxykinase (ATP) (536 aa).

Residues Arg61, Tyr195, and Lys201 each contribute to the substrate site. ATP-binding positions include Lys201, His220, and 236–244 (GLSGTGKTT). Lys201 and His220 together coordinate Mn(2+). Mn(2+) is bound at residue Asp257. ATP-binding residues include Glu285, Arg322, and Thr447. Arg322 contributes to the substrate binding site.

Belongs to the phosphoenolpyruvate carboxykinase (ATP) family. Mn(2+) is required as a cofactor.

The protein localises to the cytoplasm. The catalysed reaction is oxaloacetate + ATP = phosphoenolpyruvate + ADP + CO2. It participates in carbohydrate biosynthesis; gluconeogenesis. Its function is as follows. Involved in the gluconeogenesis. Catalyzes the conversion of oxaloacetate (OAA) to phosphoenolpyruvate (PEP) through direct phosphoryl transfer between the nucleoside triphosphate and OAA. This Sinorhizobium fredii (strain NBRC 101917 / NGR234) protein is Phosphoenolpyruvate carboxykinase (ATP).